The sequence spans 219 residues: Flagellin A (219 aa).

Positions 1-12 are excised as a propeptide; the sequence is MKVKEFMNNKKG. Residues Asn-38 and Asn-175 are each glycosylated (N-linked (GlcNAc...) asparagine).

It belongs to the archaeal flagellin family. In terms of processing, N-linked glycans consist of the 779 Da trisaccharide beta-ManNAc(Thr)-(1-4)-beta-GlcNAc3NAcA-(1-3)-beta-GlcNAc.

Its subcellular location is the archaeal flagellum. Flagellin is the subunit protein which polymerizes to form the filaments of archaeal flagella. The chain is Flagellin A (flaA) from Methanococcus voltae.